Reading from the N-terminus, the 141-residue chain is Large ribosomal subunit protein uL11 (141 aa).

Belongs to the universal ribosomal protein uL11 family. In terms of assembly, part of the ribosomal stalk of the 50S ribosomal subunit. Interacts with L10 and the large rRNA to form the base of the stalk. L10 forms an elongated spine to which L12 dimers bind in a sequential fashion forming a multimeric L10(L12)X complex. In terms of processing, one or more lysine residues are methylated.

Its function is as follows. Forms part of the ribosomal stalk which helps the ribosome interact with GTP-bound translation factors. The protein is Large ribosomal subunit protein uL11 of Herpetosiphon aurantiacus (strain ATCC 23779 / DSM 785 / 114-95).